Reading from the N-terminus, the 493-residue chain is Phospholipid transfer protein (493 aa).

Positions 1–17 (MALFGALFLALLAGAHA) are cleaved as a signal peptide. Asn-64 is a glycosylation site (N-linked (GlcNAc...) (complex) asparagine). The N-linked (GlcNAc...) asparagine glycan is linked to Asn-94. An N-linked (GlcNAc...) (complex) asparagine glycan is attached at Asn-117. N-linked (GlcNAc...) asparagine glycosylation is present at Asn-143. Cys-146 and Cys-185 are disulfide-bonded. The N-linked (GlcNAc...) (complex) asparagine glycan is linked to Asn-245. A glycan (N-linked (GlcNAc...) asparagine) is linked at Asn-398.

The protein belongs to the BPI/LBP/Plunc superfamily. BPI/LBP family. Post-translationally, glycosylation is necessary for secretion and its phospholipid transfer activity. As to expression, widely expressed. Highest level of expression in the ovary, thymus and placenta, with moderate levels found in the pancreas, small intestine, testis, lung and prostrate. Low level expression in the kidney, liver and spleen, with very low levels found in the heart, colon, skeletal muscle, leukocytes and brain. Expressed in the cortical neurons.

The protein resides in the secreted. It localises to the nucleus. It catalyses the reaction a 1,2-diacyl-sn-glycero-3-phosphocholine(in) = a 1,2-diacyl-sn-glycero-3-phosphocholine(out). It carries out the reaction a 1,2-diacyl-sn-glycero-3-phosphoethanolamine(in) = a 1,2-diacyl-sn-glycero-3-phosphoethanolamine(out). The enzyme catalyses a 1,2-diacyl-sn-glycerol(in) = a 1,2-diacyl-sn-glycerol(out). The catalysed reaction is a 1,2-diacyl-sn-glycero-3-phosphate(in) = a 1,2-diacyl-sn-glycero-3-phosphate(out). It catalyses the reaction a sphingomyelin(in) = a sphingomyelin(out). It carries out the reaction a 1,2-diacyl-sn-glycero-3-phospho-(1'-sn-glycerol)(in) = a 1,2-diacyl-sn-glycero-3-phospho-(1'-sn-glycerol)(out). The enzyme catalyses a 1,2-diacyl-sn-glycero-3-phospho-(1D-myo-inositol)(in) = a 1,2-diacyl-sn-glycero-3-phospho-(1D-myo-inositol)(out). The catalysed reaction is 1-hexadecanoyl-2-(5Z,8Z,11Z,14Z-eicosatetraenoyl)-sn-glycero-3-phosphoethanolamine(in) = 1-hexadecanoyl-2-(5Z,8Z,11Z,14Z-eicosatetraenoyl)-sn-glycero-3-phosphoethanolamine(out). It catalyses the reaction N-(hexadecanoyl)-sphing-4-enine-1-phosphocholine(in) = N-(hexadecanoyl)-sphing-4-enine-1-phosphocholine(out). It carries out the reaction 1,2-dihexadecanoyl-sn-glycero-3-phosphocholine(in) = 1,2-dihexadecanoyl-sn-glycero-3-phosphocholine(out). Its function is as follows. Mediates the transfer of phospholipids and free cholesterol from triglyceride-rich lipoproteins (low density lipoproteins or LDL and very low density lipoproteins or VLDL) into high-density lipoproteins (HDL) as well as the exchange of phospholipids between triglyceride-rich lipoproteins themselves. Facilitates the transfer of a spectrum of different lipid molecules, including diacylglycerol, phosphatidic acid, sphingomyelin, phosphatidylcholine, phosphatidylinositol, phosphatidylglycerol, cerebroside and phosphatidyl ethanolamine. Plays an important role in HDL remodeling which involves modulating the size and composition of HDL. Also plays a key role in the uptake of cholesterol from peripheral cells and tissues that is subsequently transported to the liver for degradation and excretion. Two distinct forms of PLTP exist in plasma: an active form that can transfer phosphatidylcholine from phospholipid vesicles to HDL, and an inactive form that lacks this capability. The sequence is that of Phospholipid transfer protein (PLTP) from Homo sapiens (Human).